Reading from the N-terminus, the 412-residue chain is MVDLEQLGQQAQQASYTLGLLSTAQKNQVLTAMATALTSHQDEILAANAQDLENPQVPVKFVDRLRLTADRIQDMAIGLKQVVSLPDPIGNVDRAWRNEAGLMIAKERVPLGVIGMIFEARPNVTVDASALCFKTGNAVILRGGKEALHSNQALVQVLRGALRAEAVDENAIQLITDTSHATAAKFMQLTDYVDVLIPRGSARLIQTVLAKATVPVIETGAGNCHVYVDKDAQLQMATDIVINGKVQRPSVCNATEKLLIHREVAADYLPSMIQALREQGVEVRGDAATQAIVPDVVPATDADWGTEYNDLIIAVKVVDSEAAAITHINRYNTQHSEAIVTDNYQAGKLFQQRVNAACVYINASTRFTDGFEFGFGAEIGISTQKLHARGPMGLAELTSYKYVIDGNGQIRH.

It belongs to the gamma-glutamyl phosphate reductase family.

The protein localises to the cytoplasm. The catalysed reaction is L-glutamate 5-semialdehyde + phosphate + NADP(+) = L-glutamyl 5-phosphate + NADPH + H(+). It functions in the pathway amino-acid biosynthesis; L-proline biosynthesis; L-glutamate 5-semialdehyde from L-glutamate: step 2/2. In terms of biological role, catalyzes the NADPH-dependent reduction of L-glutamate 5-phosphate into L-glutamate 5-semialdehyde and phosphate. The product spontaneously undergoes cyclization to form 1-pyrroline-5-carboxylate. The protein is Gamma-glutamyl phosphate reductase of Lactiplantibacillus plantarum (strain ATCC BAA-793 / NCIMB 8826 / WCFS1) (Lactobacillus plantarum).